The chain runs to 111 residues: Wound-induced proteinase inhibitor 1 (111 aa).

An N-terminal signal peptide occupies residues 1 to 23 (MEAKFAHIILFFLLAFSFETLMA). The propeptide occupies 24 to 36 (RKESDGPEVIKLL).

Belongs to the protease inhibitor I13 (potato type I serine protease inhibitor) family.

The protein localises to the secreted. The chain is Wound-induced proteinase inhibitor 1 from Solanum peruvianum (Peruvian tomato).